The chain runs to 226 residues: MRPHAVHALIAVKRLDQAKSRLADRLRPEHRARLVLAMLADTMTATTSVPGIAAVTVVTPDAAVADLARSLGGHVHPEPAADSADSLNAALAAAAAGVRARHGGVDLLALQADLPALRPDELADVLATAPRGGRAIVTDHAGTGTAALLVRDGGELAPAFGPDSARRHIAAGAVDLPGEWPGLRRDVDTAADLERAVELGAGSSTRALLRDIGWSCRVHEPARRVC.

Thr145, Gly161, and Ser164 together coordinate phosphoenolpyruvate.

The protein belongs to the CofC family.

It catalyses the reaction phosphoenolpyruvate + GTP + H(+) = enolpyruvoyl-2-diphospho-5'-guanosine + diphosphate. It participates in cofactor biosynthesis; coenzyme F420 biosynthesis. Guanylyltransferase that catalyzes the activation of phosphoenolpyruvate (PEP) as enolpyruvoyl-2-diphospho-5'-guanosine, via the condensation of PEP with GTP. It is involved in the biosynthesis of coenzyme F420, a hydride carrier cofactor. This is Phosphoenolpyruvate guanylyltransferase from Nocardia farcinica (strain IFM 10152).